The chain runs to 300 residues: Arrestin domain-containing protein 4 (300 aa).

2 consecutive short sequence motifs (PPxY motif) follow at residues 231 to 234 (PPNY) and 276 to 279 (PPLY).

Belongs to the arrestin family. Interacts with ADRB2. Interacts (via PPxY motifs) with ITCH, NEDD4L and WWP2. Interacts with AVPR2. Identified in a complex containing at least ARRDC4, AVPR2 and HGS. Interacts with SLC11A2; controls the incorporation of SLC11A2 into extracellular vesicles through an ubiquitination-dependent mechanism. Interacts with TRIM65.

The protein localises to the early endosome. Its subcellular location is the cell membrane. It localises to the cytoplasmic vesicle. In terms of biological role, functions as an adapter recruiting ubiquitin-protein ligases to their specific substrates. Plays a role in endocytosis of activated G protein-coupled receptors (GPCRs) Through an ubiquitination-dependent mechanism also plays a role in the incorporation of SLC11A2 into extracellular vesicles. May play a role in glucose uptake. Participates in innate immune response by promoting IFIH1/MDA5 activation through interaction with TRIM65. The chain is Arrestin domain-containing protein 4 (Arrdc4) from Rattus norvegicus (Rat).